Here is a 480-residue protein sequence, read N- to C-terminus: Protein nucleotidyltransferase YdiU (480 aa).

Gly86, Gly88, Arg89, Lys109, Asp121, Gly122, Arg172, and Arg179 together coordinate ATP. Asp248 (proton acceptor) is an active-site residue. Residues Asn249 and Asp258 each contribute to the Mg(2+) site. Asp258 contacts ATP.

This sequence belongs to the SELO family. Requires Mg(2+) as cofactor. The cofactor is Mn(2+).

It carries out the reaction L-seryl-[protein] + ATP = 3-O-(5'-adenylyl)-L-seryl-[protein] + diphosphate. It catalyses the reaction L-threonyl-[protein] + ATP = 3-O-(5'-adenylyl)-L-threonyl-[protein] + diphosphate. The enzyme catalyses L-tyrosyl-[protein] + ATP = O-(5'-adenylyl)-L-tyrosyl-[protein] + diphosphate. The catalysed reaction is L-histidyl-[protein] + UTP = N(tele)-(5'-uridylyl)-L-histidyl-[protein] + diphosphate. It carries out the reaction L-seryl-[protein] + UTP = O-(5'-uridylyl)-L-seryl-[protein] + diphosphate. It catalyses the reaction L-tyrosyl-[protein] + UTP = O-(5'-uridylyl)-L-tyrosyl-[protein] + diphosphate. In terms of biological role, nucleotidyltransferase involved in the post-translational modification of proteins. It can catalyze the addition of adenosine monophosphate (AMP) or uridine monophosphate (UMP) to a protein, resulting in modifications known as AMPylation and UMPylation. In Klebsiella pneumoniae subsp. pneumoniae (strain ATCC 700721 / MGH 78578), this protein is Protein nucleotidyltransferase YdiU.